A 236-amino-acid chain; its full sequence is Chaperone protein TorD (236 aa).

Belongs to the TorD/DmsD family. TorD subfamily.

It localises to the cytoplasm. Its function is as follows. Involved in the biogenesis of TorA. Acts on TorA before the insertion of the molybdenum cofactor and, as a result, probably favors a conformation of the apoenzyme that is competent for acquiring the cofactor. In Colwellia psychrerythraea (strain 34H / ATCC BAA-681) (Vibrio psychroerythus), this protein is Chaperone protein TorD.